The sequence spans 608 residues: Threonine--tRNA ligase (608 aa).

Positions 1 to 143 are editing domain; the sequence is MRVLYIHAER…SFKPEEGRAD (143 aa). Catalytic regions lie at residues 194–490 and 195–490; these read PKYL…PRLP and KYLE…PRLP. Residues Cys287, His338, and His459 each coordinate Zn(2+).

This sequence belongs to the class-II aminoacyl-tRNA synthetase family. As to quaternary structure, homodimer. It depends on Zn(2+) as a cofactor.

The protein resides in the cytoplasm. It catalyses the reaction tRNA(Thr) + L-threonine + ATP = L-threonyl-tRNA(Thr) + AMP + diphosphate + H(+). Catalyzes the attachment of threonine to tRNA(Thr) in a two-step reaction: L-threonine is first activated by ATP to form Thr-AMP and then transferred to the acceptor end of tRNA(Thr). Also edits incorrectly charged L-seryl-tRNA(Thr). This Pyrobaculum aerophilum (strain ATCC 51768 / DSM 7523 / JCM 9630 / CIP 104966 / NBRC 100827 / IM2) protein is Threonine--tRNA ligase.